The primary structure comprises 225 residues: Large ribosomal subunit protein eL15 (225 aa).

The segment at 159-180 is disordered; the sequence is RPFRGLTSAGKKMRGLRKSRGL. The segment covering 169–180 has biased composition (basic residues); that stretch reads KKMRGLRKSRGL.

The protein belongs to the eukaryotic ribosomal protein eL15 family.

The protein is Large ribosomal subunit protein eL15 (rpl15e) of Aeropyrum pernix (strain ATCC 700893 / DSM 11879 / JCM 9820 / NBRC 100138 / K1).